A 379-amino-acid chain; its full sequence is Succinate--CoA ligase [ADP-forming] subunit beta (379 aa).

Positions 9 to 237 (RDILARYGIP…SSDEPEAEQR (229 aa)) constitute an ATP-grasp domain. Residues Lys-45, 52 to 54 (GRG), Ile-94, and Glu-99 contribute to the ATP site. The Mg(2+) site is built by Asn-192 and Asp-206. Substrate-binding positions include Asn-257 and 314-316 (GIT).

Belongs to the succinate/malate CoA ligase beta subunit family. As to quaternary structure, heterotetramer of two alpha and two beta subunits. The cofactor is Mg(2+).

The catalysed reaction is succinate + ATP + CoA = succinyl-CoA + ADP + phosphate. It carries out the reaction GTP + succinate + CoA = succinyl-CoA + GDP + phosphate. The protein operates within carbohydrate metabolism; tricarboxylic acid cycle; succinate from succinyl-CoA (ligase route): step 1/1. Its function is as follows. Succinyl-CoA synthetase functions in the citric acid cycle (TCA), coupling the hydrolysis of succinyl-CoA to the synthesis of either ATP or GTP and thus represents the only step of substrate-level phosphorylation in the TCA. The beta subunit provides nucleotide specificity of the enzyme and binds the substrate succinate, while the binding sites for coenzyme A and phosphate are found in the alpha subunit. The polypeptide is Succinate--CoA ligase [ADP-forming] subunit beta (Roseiflexus sp. (strain RS-1)).